The primary structure comprises 221 residues: Cytochrome c biogenesis ATP-binding export protein CcmA (221 aa).

One can recognise an ABC transporter domain in the interval Leu14–Ser221. Gly46–Ser53 contributes to the ATP binding site.

The protein belongs to the ABC transporter superfamily. CcmA exporter (TC 3.A.1.107) family. As to quaternary structure, the complex is composed of two ATP-binding proteins (CcmA) and two transmembrane proteins (CcmB).

It localises to the cell inner membrane. It catalyses the reaction heme b(in) + ATP + H2O = heme b(out) + ADP + phosphate + H(+). Part of the ABC transporter complex CcmAB involved in the biogenesis of c-type cytochromes; once thought to export heme, this seems not to be the case, but its exact role is uncertain. Responsible for energy coupling to the transport system. The protein is Cytochrome c biogenesis ATP-binding export protein CcmA of Zymomonas mobilis subsp. mobilis (strain ATCC 31821 / ZM4 / CP4).